The primary structure comprises 164 residues: Biotin carboxyl carrier protein of acetyl-CoA carboxylase (164 aa).

The region spanning 86 to 162 (GDFIVSPLVG…QFGSKLFRIV (77 aa)) is the Biotinyl-binding domain. N6-biotinyllysine is present on Lys-128.

As to quaternary structure, homodimer.

It functions in the pathway lipid metabolism; fatty acid biosynthesis. In terms of biological role, this protein is a component of the acetyl coenzyme A carboxylase complex; first, biotin carboxylase catalyzes the carboxylation of the carrier protein and then the transcarboxylase transfers the carboxyl group to form malonyl-CoA. The polypeptide is Biotin carboxyl carrier protein of acetyl-CoA carboxylase (accB) (Chlamydia trachomatis serovar D (strain ATCC VR-885 / DSM 19411 / UW-3/Cx)).